Reading from the N-terminus, the 141-residue chain is Protein NrdI (141 aa).

This sequence belongs to the NrdI family.

Functionally, probably involved in ribonucleotide reductase function. The chain is Protein NrdI from Wigglesworthia glossinidia brevipalpis.